The following is a 535-amino-acid chain: BAR/IMD domain-containing adapter protein 2 (535 aa).

The region spanning 1–250 (MSLSRSEEMH…AQLMQQMANS (250 aa)) is the IMD domain. A coiled-coil region spans residues 1–251 (MSLSRSEEMH…QLMQQMANSN (251 aa)). S262, S324, S326, and S337 each carry phosphoserine. The interval 308-370 (SEDYNPWADR…TLPRSSSMAA (63 aa)) is disordered. Residues 321–335 (QPKSLSPPQSQSKLS) show a composition bias toward low complexity. T341 is modified (phosphothreonine). S347 carries the phosphoserine modification. Polar residues predominate over residues 349–368 (TPKNSYATTENKTLPRSSSM). The residue at position 361 (T361) is a Phosphothreonine. Phosphoserine is present on residues S367, S385, S396, and S455. The SH3 domain occupies 375 to 438 (NGRMRVKAIF…PFSYTRVLDS (64 aa)). Residues 445–486 (HMSLQQGKSSSTGNLLDKDDLALPPPDYGTSSRAFPSQTAGT) form a disordered region. Polar residues-rich tracts occupy residues 447–458 (SLQQGKSSSTGN) and 473–486 (GTSS…TAGT).

As to quaternary structure, homodimer. Interacts with CDC42 and RAC1 that have been activated by GTP binding. Binds TIAM1. Interacts with ATN1, ADGRB1, DIAPH1, EPS8, SHANK1, SHANK2, SHANK3, WASF1 and WASF2. Interacts with ENAH after recruitment of CDC42. In terms of processing, phosphorylated on tyrosine residues by INSR in response to insulin treatment. Ubiquitous.

The protein localises to the cytoplasm. It is found in the membrane. It localises to the cell projection. The protein resides in the filopodium. Its subcellular location is the ruffle. The protein localises to the cytoskeleton. Functionally, adapter protein that links membrane-bound small G-proteins to cytoplasmic effector proteins. Necessary for CDC42-mediated reorganization of the actin cytoskeleton and for RAC1-mediated membrane ruffling. Involved in the regulation of the actin cytoskeleton by WASF family members and the Arp2/3 complex. Plays a role in neurite growth. Acts syngeristically with ENAH to promote filipodia formation. Plays a role in the reorganization of the actin cytoskeleton in response to bacterial infection. Participates in actin bundling when associated with EPS8, promoting filopodial protrusions. In Rattus norvegicus (Rat), this protein is BAR/IMD domain-containing adapter protein 2 (Baiap2).